The following is a 28-amino-acid chain: U15-ctenitoxin-Co1a (28 aa).

2 disulfide bridges follow: Cys-3–Cys-17 and Cys-10–Cys-22.

In terms of tissue distribution, expressed by the venom gland.

It is found in the secreted. Functionally, insecticidal neurotoxin that reversibly inhibits the N-methyl-D-aspartate (NMDA)-subtype of ionotropic glutamate receptor (GRIN) and inhibits inactivation of insect sodium channels (Nav). In vivo, is highly toxic to insects. In Ctenus ornatus (Brazilian spider), this protein is U15-ctenitoxin-Co1a.